Reading from the N-terminus, the 216-residue chain is Protein-L-isoaspartate O-methyltransferase (216 aa).

Residue Ser-61 is part of the active site.

Belongs to the methyltransferase superfamily. L-isoaspartyl/D-aspartyl protein methyltransferase family.

It is found in the cytoplasm. The enzyme catalyses [protein]-L-isoaspartate + S-adenosyl-L-methionine = [protein]-L-isoaspartate alpha-methyl ester + S-adenosyl-L-homocysteine. In terms of biological role, catalyzes the methyl esterification of L-isoaspartyl residues in peptides and proteins that result from spontaneous decomposition of normal L-aspartyl and L-asparaginyl residues. It plays a role in the repair and/or degradation of damaged proteins. The chain is Protein-L-isoaspartate O-methyltransferase (pcm) from Pyrococcus abyssi (strain GE5 / Orsay).